The sequence spans 261 residues: 14-3-3-like protein GF14-12 (261 aa).

It belongs to the 14-3-3 family.

In terms of biological role, is associated with a DNA binding complex to bind to the G box, a well-characterized cis-acting DNA regulatory element found in plant genes. The polypeptide is 14-3-3-like protein GF14-12 (GRF2) (Zea mays (Maize)).